Reading from the N-terminus, the 150-residue chain is uncharacterized protein (150 aa).

Belongs to the aspartate/glutamate racemases family.

This is an uncharacterized protein from Pectobacterium carotovorum subsp. carotovorum (Erwinia carotovora subsp. carotovora).